A 655-amino-acid chain; its full sequence is Probable potassium transport system protein Kup (655 aa).

The next 12 helical transmembrane spans lie at Gly-19–Met-39, Ile-42–Trp-62, Val-102–Ile-122, Leu-132–Phe-152, Ile-161–Gly-181, Ser-214–Ser-234, Ile-246–Ile-266, Ile-282–Ala-302, Leu-338–Phe-358, Leu-370–Ile-390, Phe-395–Ala-415, and Phe-420–Ile-440.

It belongs to the HAK/KUP transporter (TC 2.A.72) family.

The protein localises to the cell inner membrane. It catalyses the reaction K(+)(in) + H(+)(in) = K(+)(out) + H(+)(out). In terms of biological role, transport of potassium into the cell. Likely operates as a K(+):H(+) symporter. In Cytophaga hutchinsonii (strain ATCC 33406 / DSM 1761 / CIP 103989 / NBRC 15051 / NCIMB 9469 / D465), this protein is Probable potassium transport system protein Kup.